A 435-amino-acid chain; its full sequence is Elongation factor 1-alpha (435 aa).

The region spanning 5-226 (KTHINLVVIG…DTMEPPKRPT (222 aa)) is the tr-type G domain. Residues 14 to 21 (GHVDSGKS) form a G1 region. 14-21 (GHVDSGKS) is a GTP binding site. Positions 70-74 (GITID) are G2. Residues 91-94 (DAPG) are G3. GTP is bound by residues 91 to 95 (DAPGH) and 151 to 154 (NKMD). Residues 151-154 (NKMD) are G4. Residues 190 to 192 (SGF) form a G5 region.

It belongs to the TRAFAC class translation factor GTPase superfamily. Classic translation factor GTPase family. EF-Tu/EF-1A subfamily.

The protein localises to the cytoplasm. This protein promotes the GTP-dependent binding of aminoacyl-tRNA to the A-site of ribosomes during protein biosynthesis. This chain is Elongation factor 1-alpha, found in Cryptosporidium parvum.